Here is a 440-residue protein sequence, read N- to C-terminus: DNA polymerase delta small subunit (440 aa).

It belongs to the DNA polymerase delta/II small subunit family. Heterodimer with subunits of 125 kDa and 50 kDa.

It localises to the nucleus. It carries out the reaction DNA(n) + a 2'-deoxyribonucleoside 5'-triphosphate = DNA(n+1) + diphosphate. In terms of biological role, the function of the small subunit is not yet clear. This is DNA polymerase delta small subunit (POLD2) from Arabidopsis thaliana (Mouse-ear cress).